Here is a 293-residue protein sequence, read N- to C-terminus: Carbapenem-hydrolyzing beta-lactamase KPC (293 aa).

The first 24 residues, 1–24, serve as a signal peptide directing secretion; it reads MSLYRRLVLLSCLSWPLAGFSATA. The active-site Acyl-ester intermediate is the Ser69. The active-site Proton acceptor is the Glu167. 233–235 provides a ligand contact to substrate; sequence KTG.

Belongs to the class-A beta-lactamase family.

The catalysed reaction is a beta-lactam + H2O = a substituted beta-amino acid. With respect to regulation, not inhibited by EDTA, inhibited by clavulanic acid and tazobactam. Functionally, hydrolyzes carbapenems, penicillins, cephalosporins and aztreonam with varying efficiency. The polypeptide is Carbapenem-hydrolyzing beta-lactamase KPC (bla) (Klebsiella oxytoca).